Here is a 134-residue protein sequence, read N- to C-terminus: Large-conductance mechanosensitive channel (134 aa).

A run of 2 helical transmembrane segments spans residues 10 to 30 and 76 to 96; these read FAMRGNVVDLAVGIIIGGAFG and GAFLQTIVDFVIIAFSIFVVI.

Belongs to the MscL family. In terms of assembly, homopentamer.

It localises to the cell inner membrane. Its function is as follows. Channel that opens in response to stretch forces in the membrane lipid bilayer. May participate in the regulation of osmotic pressure changes within the cell. The sequence is that of Large-conductance mechanosensitive channel from Prosthecochloris aestuarii (strain DSM 271 / SK 413).